A 150-amino-acid polypeptide reads, in one-letter code: Deoxyuridine 5'-triphosphate nucleotidohydrolase (150 aa).

Residues Arg69–Gly71, Asn82, Thr86–Asp88, and Lys96 each bind substrate.

The protein belongs to the dUTPase family. It depends on Mg(2+) as a cofactor.

The enzyme catalyses dUTP + H2O = dUMP + diphosphate + H(+). The protein operates within pyrimidine metabolism; dUMP biosynthesis; dUMP from dCTP (dUTP route): step 2/2. Functionally, this enzyme is involved in nucleotide metabolism: it produces dUMP, the immediate precursor of thymidine nucleotides and it decreases the intracellular concentration of dUTP so that uracil cannot be incorporated into DNA. The sequence is that of Deoxyuridine 5'-triphosphate nucleotidohydrolase from Aquifex aeolicus (strain VF5).